Reading from the N-terminus, the 235-residue chain is Ribitol-5-phosphate cytidylyltransferase (235 aa).

Residues 7-10, 82-88, and serine 113 contribute to the CTP site; these read LAGG and GADRNTS.

It belongs to the IspD/TarI cytidylyltransferase family. TarI subfamily.

It carries out the reaction D-ribitol 5-phosphate + CTP + H(+) = CDP-L-ribitol + diphosphate. It functions in the pathway cell wall biogenesis; poly(ribitol phosphate) teichoic acid biosynthesis. In terms of biological role, catalyzes the transfer of the cytidylyl group of CTP to D-ribitol 5-phosphate. The chain is Ribitol-5-phosphate cytidylyltransferase from Streptococcus pneumoniae serotype 19F (strain G54).